A 627-amino-acid polypeptide reads, in one-letter code: Protein CER1-like 1 (627 aa).

A run of 5 helical transmembrane segments spans residues 19–39, 48–68, 126–146, 186–206, and 328–348; these read FKYLLVAPLVMASMHSYVTAV, LMIVVLMLWRIVHSQIWISVS, GAILMALLHAGPVEFLYYWFH, LLFAIPMVTASLCGILSIVSI, and YLTCFMWPFTLLCSFALTSAI. A Fatty acid hydroxylase domain is found at 138–272; that stretch reads VEFLYYWFHR…MPIYDFIYGT (135 aa).

Belongs to the sterol desaturase family. Expressed in flowers and siliques. Not detected in pollen, pedicels and seeds.

The protein resides in the membrane. This Arabidopsis thaliana (Mouse-ear cress) protein is Protein CER1-like 1.